A 643-amino-acid polypeptide reads, in one-letter code: 1-deoxy-D-xylulose-5-phosphate synthase (643 aa).

Thiamine diphosphate is bound by residues H72 and 113 to 115 (GHA). D144 provides a ligand contact to Mg(2+). Thiamine diphosphate contacts are provided by residues 145–146 (GA), N174, Y287, and E370. N174 is a Mg(2+) binding site.

This sequence belongs to the transketolase family. DXPS subfamily. In terms of assembly, homodimer. It depends on Mg(2+) as a cofactor. Thiamine diphosphate is required as a cofactor.

It catalyses the reaction D-glyceraldehyde 3-phosphate + pyruvate + H(+) = 1-deoxy-D-xylulose 5-phosphate + CO2. It functions in the pathway metabolic intermediate biosynthesis; 1-deoxy-D-xylulose 5-phosphate biosynthesis; 1-deoxy-D-xylulose 5-phosphate from D-glyceraldehyde 3-phosphate and pyruvate: step 1/1. Catalyzes the acyloin condensation reaction between C atoms 2 and 3 of pyruvate and glyceraldehyde 3-phosphate to yield 1-deoxy-D-xylulose-5-phosphate (DXP). This chain is 1-deoxy-D-xylulose-5-phosphate synthase, found in Prochlorococcus marinus (strain MIT 9211).